Consider the following 141-residue polypeptide: Putative lipoprotein Tanf_09445 (141 aa).

The signal sequence occupies residues 1–20; it reads MKQKIILWIGALLLLTAGTG. The N-palmitoyl cysteine moiety is linked to residue Cys-21. A lipid anchor (S-diacylglycerol cysteine) is attached at Cys-21.

The protein resides in the cell membrane. The sequence is that of Putative lipoprotein Tanf_09445 from Tannerella forsythia (strain ATCC 43037 / JCM 10827 / CCUG 21028 A / KCTC 5666 / FDC 338) (Bacteroides forsythus).